The chain runs to 99 residues: Cell cycle protein GpsB (99 aa).

Positions 34-71 (LDMIIKDYETFHQEIEELQQENLQLKKQLEEASKKQPV) form a coiled coil.

The protein belongs to the GpsB family. As to quaternary structure, forms polymers through the coiled coil domains. Interacts with PBP1, MreC and EzrA.

Its subcellular location is the cytoplasm. Its function is as follows. Divisome component that associates with the complex late in its assembly, after the Z-ring is formed, and is dependent on DivIC and PBP2B for its recruitment to the divisome. Together with EzrA, is a key component of the system that regulates PBP1 localization during cell cycle progression. Its main role could be the removal of PBP1 from the cell pole after pole maturation is completed. Also contributes to the recruitment of PBP1 to the division complex. Not essential for septum formation. This Bacillus velezensis (strain DSM 23117 / BGSC 10A6 / LMG 26770 / FZB42) (Bacillus amyloliquefaciens subsp. plantarum) protein is Cell cycle protein GpsB.